The following is a 239-amino-acid chain: Large ribosomal subunit protein eL32 (239 aa).

2 stretches are compositionally biased toward acidic residues: residues 1-12 and 67-91; these read MSDENDTPEELA and VEADTDAEVEEVGGDDEADTDADVE. 2 disordered regions span residues 1–23 and 64–178; these read MSDENDTPEELADISGVGPSKAE and GLEV…HPSG. Positions 92 to 113 are enriched in basic and acidic residues; it reads TELRARGLTEKTPDLSEDEQRL. Residues 130–155 are compositionally biased toward basic residues; it reads YHKKKRTPTSWRRPKGTLSKQRRGIK.

The protein belongs to the eukaryotic ribosomal protein eL32 family.

This Halobacterium salinarum (strain ATCC 700922 / JCM 11081 / NRC-1) (Halobacterium halobium) protein is Large ribosomal subunit protein eL32 (rpl32e).